Here is a 161-residue protein sequence, read N- to C-terminus: Kininogen-2 (161 aa).

The first 23 residues, 1–23 (MRLWFCLSFFVVLCLEHFPGTLA), serve as a signal peptide directing secretion. An intrachain disulfide couples Cys150 to Cys156. Val160 bears the Valine amide mark.

The protein belongs to the bradykinin-related peptide family. Expressed by the skin glands.

The protein resides in the secreted. Functionally, inhibits ACE with a Ki of 1.6 uM, and targets B2 bradykinin receptor (BDKRB2). Provokes contraction of smooth muscle preparation (ileum). In vivo, induces an early hyperalgesic effects in living rats after intraplantar injection. Inhibits the bradykinin-induced in vitro relaxation of rat arterial smooth muscle and constriction of intestinal smooth muscle. May target bradykinin receptors (BDKRB). In Bombina orientalis (Oriental fire-bellied toad), this protein is Kininogen-2.